The following is a 502-amino-acid chain: MRIGFDHEKYLEEQSKYILERVNNYDKLYLEFGGKLLFDLHAKRVLPGFDENAKIKLLHKLKEKVEIIICLYAGDIERNKIRGDFGITYDVDVLRLIDDLRGYDLEVNSVVITRYSGQPATNIFINKLERRGIKVYKHEATKGYPTDVDTIVSDEGYGKNPYIETTKPIVVVTAPGPGSGKLATCLSQLYHEYKRGNVAGYSKFETFPVWNVPLKHPLNIAYESATVDLKDVNMIDSFHFDAYNKVAVNYNRDIESFPVLKRIIEKITGEESVYKSPTDMGVNRVGFGIVDDEVVKEASKQEIIRRAFKTACEYKKGYVDKETFHRAKLIMEEMNLKEEDRKVVIPAREYAAKLKERANKSETCTVVALELEDGTILTGRSSELMDGTAAVILNAVKHYANISDEIHLISPVILEPIINLKAKTLGSKRTALSCEEVLIALSICAATNPTAQVAMGRLPMLKGCQAHSTTILSTNEEQTFRKLGIDVTCDPEYISESLYYNN.

The protein belongs to the UPF0371 family.

The chain is UPF0371 protein CLJ_B0384 from Clostridium botulinum (strain 657 / Type Ba4).